We begin with the raw amino-acid sequence, 64 residues long: Large ribosomal subunit protein bL35 (64 aa).

This sequence belongs to the bacterial ribosomal protein bL35 family.

This chain is Large ribosomal subunit protein bL35, found in Acinetobacter baylyi (strain ATCC 33305 / BD413 / ADP1).